Reading from the N-terminus, the 126-residue chain is Large ribosomal subunit protein bL20 (126 aa).

This sequence belongs to the bacterial ribosomal protein bL20 family.

Binds directly to 23S ribosomal RNA and is necessary for the in vitro assembly process of the 50S ribosomal subunit. It is not involved in the protein synthesizing functions of that subunit. This is Large ribosomal subunit protein bL20 from Parafrankia sp. (strain EAN1pec).